A 608-amino-acid chain; its full sequence is Dihydroxy-acid dehydratase, chloroplastic (608 aa).

Residues 1–34 (MQATIFSPRATLFPCKPLLPSHNVNSRRPSIISC) constitute a chloroplast transit peptide. The residue at position 35 (Ser-35) is an N-acetylserine. Residue Cys-100 participates in [2Fe-2S] cluster binding. Asp-132 is a Mg(2+) binding site. Cys-173 contacts [2Fe-2S] cluster. Asp-174 provides a ligand contact to Mg(2+). [2Fe-2S] cluster is bound at residue Cys-245. Residue Glu-497 participates in Mg(2+) binding. Ser-523 (proton acceptor) is an active-site residue.

Belongs to the IlvD/Edd family. [2Fe-2S] cluster is required as a cofactor. Requires Mg(2+) as cofactor.

It is found in the plastid. It localises to the chloroplast. The enzyme catalyses (2R)-2,3-dihydroxy-3-methylbutanoate = 3-methyl-2-oxobutanoate + H2O. It catalyses the reaction (2R,3R)-2,3-dihydroxy-3-methylpentanoate = (S)-3-methyl-2-oxopentanoate + H2O. The protein operates within amino-acid biosynthesis; L-isoleucine biosynthesis; L-isoleucine from 2-oxobutanoate: step 3/4. It participates in amino-acid biosynthesis; L-valine biosynthesis; L-valine from pyruvate: step 3/4. With respect to regulation, is highly competitively inhibited by the fungal sesquiterpenoid aspterric acid, which is effective as a herbicide in spray applications. Functions in the biosynthesis of branched-chain amino acids. Catalyzes the dehydration of (2R,3R)-2,3-dihydroxy-3-methylpentanoate (2,3-dihydroxy-3-methylvalerate) into 2-oxo-3-methylpentanoate (2-oxo-3-methylvalerate) and of (2R)-2,3-dihydroxy-3-methylbutanoate (2,3-dihydroxyisovalerate) into 2-oxo-3-methylbutanoate (2-oxoisovalerate), the penultimate precursor to L-isoleucine and L-valine, respectively. The polypeptide is Dihydroxy-acid dehydratase, chloroplastic (Arabidopsis thaliana (Mouse-ear cress)).